Reading from the N-terminus, the 172-residue chain is uncharacterized protein (172 aa).

This sequence belongs to the flavoredoxin family. It depends on FMN as a cofactor.

This is an uncharacterized protein from Pyrococcus abyssi (strain GE5 / Orsay).